We begin with the raw amino-acid sequence, 166 residues long: Phosphopantetheine adenylyltransferase (166 aa).

Position 11 (Ser-11) interacts with substrate. ATP-binding positions include 11-12 (SF) and His-19. Residues Lys-43, Val-80, and Arg-94 each coordinate substrate. Residues 95-97 (GLR), Glu-105, and 130-136 (VRTVTAT) each bind ATP.

This sequence belongs to the bacterial CoaD family. In terms of assembly, homohexamer. It depends on Mg(2+) as a cofactor.

It is found in the cytoplasm. The enzyme catalyses (R)-4'-phosphopantetheine + ATP + H(+) = 3'-dephospho-CoA + diphosphate. Its pathway is cofactor biosynthesis; coenzyme A biosynthesis; CoA from (R)-pantothenate: step 4/5. Reversibly transfers an adenylyl group from ATP to 4'-phosphopantetheine, yielding dephospho-CoA (dPCoA) and pyrophosphate. The sequence is that of Phosphopantetheine adenylyltransferase from Chelativorans sp. (strain BNC1).